Consider the following 140-residue polypeptide: NADPH-dependent 7-cyano-7-deazaguanine reductase (140 aa).

Residue cysteine 51 is the Thioimide intermediate of the active site. The active-site Proton donor is the aspartate 58. Substrate contacts are provided by residues 73-75 (LES) and 92-93 (HE).

It belongs to the GTP cyclohydrolase I family. QueF type 1 subfamily.

It localises to the cytoplasm. It carries out the reaction 7-aminomethyl-7-carbaguanine + 2 NADP(+) = 7-cyano-7-deazaguanine + 2 NADPH + 3 H(+). The protein operates within tRNA modification; tRNA-queuosine biosynthesis. Functionally, catalyzes the NADPH-dependent reduction of 7-cyano-7-deazaguanine (preQ0) to 7-aminomethyl-7-deazaguanine (preQ1). This is NADPH-dependent 7-cyano-7-deazaguanine reductase from Syntrophus aciditrophicus (strain SB).